The primary structure comprises 408 residues: MDASNNTTSWNILQRGRMGPSWRRCPVSYQIIASLFLGRSFSAGIFGNACVIAAIALERSLQNVANYLIGSLAVTDLMVSVLVLPMAAQNQVLNKWTLGQVTCDIFISLDVLCCTSSILHLCAIALDRYWAITDPIDYVNKRTPRRAAVLISITWIVGFSISIPPMLGWRTPEDRSDPNACRISEDPGYTIYSTFGAFYIPLILMLVLYGKIFKAARFRIRKTVKKAEKKKVADTCLSVSQQSPKEKQRGAQQELEEVGGAQAQRCVNGAIRHGEEGAVLEIIEVHHYVNSKCHLHCKPVPPPEQLPPALKNDRATEAKRKVALARERKTVKTLGIIMGTFILCWLPFFIVALVLPFCETCHMPHLLFDIITWLGYSNSLLNPIIYAYFNKDFQSAFKKIIKCKFCRQ.

Topologically, residues 1 to 32 (MDASNNTTSWNILQRGRMGPSWRRCPVSYQII) are extracellular. Residues Asn5 and Asn6 are each glycosylated (N-linked (GlcNAc...) asparagine). The chain crosses the membrane as a helical span at residues 33–53 (ASLFLGRSFSAGIFGNACVIA). Over 54–67 (AIALERSLQNVANY) the chain is Cytoplasmic. A helical transmembrane segment spans residues 68 to 92 (LIGSLAVTDLMVSVLVLPMAAQNQV). The Extracellular segment spans residues 93 to 101 (LNKWTLGQV). A helical transmembrane segment spans residues 102–126 (TCDIFISLDVLCCTSSILHLCAIAL). Residues Cys103 and Cys181 are joined by a disulfide bond. 2 residues coordinate serotonin: Asp110 and Cys114. The short motif at 127-129 (DRY) is the DRY motif; important for ligand-induced conformation changes element. Residues 127 to 146 (DRYWAITDPIDYVNKRTPRR) lie on the Cytoplasmic side of the membrane. Residues 147–168 (AAVLISITWIVGFSISIPPMLG) form a helical membrane-spanning segment. Residues 169 to 187 (WRTPEDRSDPNACRISEDP) lie on the Extracellular side of the membrane. A helical transmembrane segment spans residues 188-210 (GYTIYSTFGAFYIPLILMLVLYG). The Cytoplasmic portion of the chain corresponds to 211–333 (KIFKAARFRI…LARERKTVKT (123 aa)). The disordered stretch occupies residues 235–255 (TCLSVSQQSPKEKQRGAQQEL). The 1D-myo-inositol 4-phosphate site is built by Lys332, Thr333, and Gly339. The helical transmembrane segment at 334–357 (LGIIMGTFILCWLPFFIVALVLPF) threads the bilayer. Residues 358-364 (CETCHMP) lie on the Extracellular side of the membrane. Residues 365-389 (HLLFDIITWLGYSNSLLNPIIYAYF) traverse the membrane as a helical segment. The NPxxY motif; important for ligand-induced conformation changes and signaling signature appears at 382–386 (NPIIY). 1D-myo-inositol 4-phosphate contacts are provided by Phe389, Asn390, and Lys391. The Cytoplasmic segment spans residues 390 to 408 (NKDFQSAFKKIIKCKFCRQ).

The protein belongs to the G-protein coupled receptor 1 family. 5-hydroxytryptamine receptor subfamily. HTR1A sub-subfamily. In terms of tissue distribution, first expressed in the rostral part of the brain stem at stage 22. At later stages of development, expression is localized to serotonergic neurons. The expression pattern changes in the tadpole of stage 41 where, in addition to serotonergic neurons, expression is also localized to the inner nuclear layer (INL) of the developing retina. This expression pattern continues through to the start of metamorphosis (stage 46). In adults, expressed in the brain, in particular the telencephalon, diencephalon and mesencephalon. In the telencephalic region, expression is localized to the lateral, dorsal and medial pallium, and in the striatum, septum and amygdala. In the mesencephalic region, expression is strongest in the optic tectum and torus semicircularis with moderate levels of expression in tegmental nuclei. In diencephalon, localized to the dorsal and ventral thalamus and the preoptic area of the hypothalamus.

The protein resides in the cell membrane. G-protein coupled receptor activity is regulated by lipids: phosphatidylinositol 4-phosphate increases HTR1A-mediated activity. In terms of biological role, G-protein coupled receptor for 5-hydroxytryptamine (serotonin). Also functions as a receptor for various drugs and psychoactive substances. Ligand binding causes a conformation change that triggers signaling via guanine nucleotide-binding proteins (G proteins) and modulates the activity of downstream effectors, such as adenylate cyclase. HTR1A is coupled to G(i)/G(o) G alpha proteins and mediates inhibitory neurotransmission: signaling inhibits adenylate cyclase activity and activates a phosphatidylinositol-calcium second messenger system that regulates the release of Ca(2+) ions from intracellular stores. Beta-arrestin family members regulate signaling by mediating both receptor desensitization and resensitization processes. Activation of the receptor may play a role in the exit from G0 phase and in promoting DNA synthesis. This is 5-hydroxytryptamine receptor 1A from Xenopus laevis (African clawed frog).